The primary structure comprises 95 residues: Aspartyl/glutamyl-tRNA(Asn/Gln) amidotransferase subunit C (95 aa).

The protein belongs to the GatC family. As to quaternary structure, heterotrimer of A, B and C subunits.

It catalyses the reaction L-glutamyl-tRNA(Gln) + L-glutamine + ATP + H2O = L-glutaminyl-tRNA(Gln) + L-glutamate + ADP + phosphate + H(+). The catalysed reaction is L-aspartyl-tRNA(Asn) + L-glutamine + ATP + H2O = L-asparaginyl-tRNA(Asn) + L-glutamate + ADP + phosphate + 2 H(+). Functionally, allows the formation of correctly charged Asn-tRNA(Asn) or Gln-tRNA(Gln) through the transamidation of misacylated Asp-tRNA(Asn) or Glu-tRNA(Gln) in organisms which lack either or both of asparaginyl-tRNA or glutaminyl-tRNA synthetases. The reaction takes place in the presence of glutamine and ATP through an activated phospho-Asp-tRNA(Asn) or phospho-Glu-tRNA(Gln). The chain is Aspartyl/glutamyl-tRNA(Asn/Gln) amidotransferase subunit C from Clostridium botulinum (strain ATCC 19397 / Type A).